Here is a 429-residue protein sequence, read N- to C-terminus: Trigger factor (429 aa).

The PPIase FKBP-type domain maps to 161-246; it reads GDRLSIDFKG…INEVALPKEP (86 aa).

Belongs to the FKBP-type PPIase family. Tig subfamily.

The protein localises to the cytoplasm. The enzyme catalyses [protein]-peptidylproline (omega=180) = [protein]-peptidylproline (omega=0). In terms of biological role, involved in protein export. Acts as a chaperone by maintaining the newly synthesized protein in an open conformation. Functions as a peptidyl-prolyl cis-trans isomerase. This chain is Trigger factor, found in Ruthia magnifica subsp. Calyptogena magnifica.